Consider the following 300-residue polypeptide: 1D-myo-inositol 2-acetamido-2-deoxy-alpha-D-glucopyranoside deacetylase (300 aa).

Residues His-13, Asp-16, and His-147 each coordinate Zn(2+).

The protein belongs to the MshB deacetylase family. The cofactor is Zn(2+).

It catalyses the reaction 1D-myo-inositol 2-acetamido-2-deoxy-alpha-D-glucopyranoside + H2O = 1D-myo-inositol 2-amino-2-deoxy-alpha-D-glucopyranoside + acetate. In terms of biological role, catalyzes the deacetylation of 1D-myo-inositol 2-acetamido-2-deoxy-alpha-D-glucopyranoside (GlcNAc-Ins) in the mycothiol biosynthesis pathway. In Mycolicibacterium paratuberculosis (strain ATCC BAA-968 / K-10) (Mycobacterium paratuberculosis), this protein is 1D-myo-inositol 2-acetamido-2-deoxy-alpha-D-glucopyranoside deacetylase.